The following is a 310-amino-acid chain: Ribosomal RNA small subunit methyltransferase H (310 aa).

S-adenosyl-L-methionine is bound by residues 32–34 (AGH), Asp-52, Phe-79, Asp-100, and Gln-107.

Belongs to the methyltransferase superfamily. RsmH family.

The protein localises to the cytoplasm. The enzyme catalyses cytidine(1402) in 16S rRNA + S-adenosyl-L-methionine = N(4)-methylcytidine(1402) in 16S rRNA + S-adenosyl-L-homocysteine + H(+). Its function is as follows. Specifically methylates the N4 position of cytidine in position 1402 (C1402) of 16S rRNA. This chain is Ribosomal RNA small subunit methyltransferase H, found in Bacillus pumilus (strain SAFR-032).